The primary structure comprises 568 residues: Phosphoprotein (568 aa).

Residues 1-23 (MDQDALISKEDSEVEREASGGRE) form a disordered region. Residues 7–20 (ISKEDSEVEREASG) are compositionally biased toward basic and acidic residues. The N0 binding stretch occupies residues 33–41 (DAVLSSEPT). The interval 54-317 (INTLQRPGST…SPETDATKKG (264 aa)) is disordered. 3 stretches are compositionally biased toward basic and acidic residues: residues 99–110 (AEAHARNVDKQN), 150–168 (GAED…RGED), and 175–193 (EEIR…RADN). Residues Ser-249, Ser-257, and Ser-260 each carry the phosphoserine; by host modification. The tract at residues 344 to 411 (FESSRDASYV…SFRDIYKRFS (68 aa)) is multimerization. Residues 364–429 (YAEMAFNVCG…LLMSNLSTLH (66 aa)) are a coiled coil. Residues 412 to 445 (EYQKEQNSLLMSNLSTLHIITDRGGKTDNPDSPT) form a l protein binding region. A disordered region spans residues 433–462 (DRGGKTDNPDSPTRSPSVFAKTKENKTKAT). Phosphoserine; by host occurs at positions 447 and 449. Over residues 453–462 (KTKENKTKAT) the composition is skewed to basic and acidic residues. The tract at residues 479 to 568 (DLLREDEFRE…VEEDIESLTN (90 aa)) is interaction with the nucleocapsid (N-RNA).

Belongs to the respirovirus P protein family. Homotetramer. Interacts (via multimerization domain) with polymerase L; this interaction forms the polymerase complex. Interacts (via N-terminus) with N0; this interaction allows P to chaperon N0 before encapsidation and form the N-P complex. Interacts (via C-terminus) with N-RNA template; this interaction positions the polymerase on the template. Phosphorylated by PKC/PRKCZ, and other unknown kinases. Phosphorylation is necessary for viral transcription and replication. The N-terminus contains the majority of phosphorylated sites. Ser-249 is the major site of phosphorylation, but is not necessary for most functions.

The protein localises to the host cytoplasm. Essential cofactor of the RNA polymerase L that plays a central role in the transcription and replication by forming the polymerase complex with RNA polymerase L and recruiting L to the genomic N-RNA template for RNA synthesis. Also plays a central role in the encapsidation of nascent RNA chains by forming the encapsidation complex with the nucleocapsid protein N (N-P complex). Acts as a chaperone for newly synthesized free N protein, so-called N0, allowing encapsidation of nascent RNA chains during replication. The nucleoprotein protein N prevents excessive phosphorylation of P, which leads to down-regulation of viral transcription/ replication. Participates, together with N, in the formation of viral factories (viroplasms), which are large inclusions in the host cytoplasm where replication takes place. Recruits host PI4KB and remodel the host endoplasmic reticulum membrane to form viral replication factories. The chain is Phosphoprotein (P/V/C) from Sendai virus (strain Ohita) (SeV).